The sequence spans 245 residues: MEGEMQRHIKLTKAQTTPVVLVVGDPGRVDKVKVLCDSYVDLAYNREYKSVECTYKGQKFLCVSHGVGSAGCAICFEELMNNGAKVIIRAGSCGSLQPTQMKRGDICICNAAVREDRVSHLMIYSDFPAVADYEVYATLNQVAEELKVPVFNGISLSSDMYYPHKIIPTRLEDYSKANVAVVEMEVATLMVMGTLRKVKTGGIFIVDGCPLKWDEGDFDNNLVPERLENMIKISLETCARLAKKY.

His8 lines the a purine D-ribonucleoside pocket. Phosphate-binding positions include 24–28 (GDPGR), Arg46, and 89–92 (RAGS). Position 184-185 (184-185 (ME)) interacts with a purine D-ribonucleoside. Asp207 functions as the Proton donor in the catalytic mechanism.

The protein belongs to the PNP/MTAP phosphorylase family. Homohexamer; trimer of homodimers.

It carries out the reaction inosine + phosphate = alpha-D-ribose 1-phosphate + hypoxanthine. The enzyme catalyses guanosine + phosphate = alpha-D-ribose 1-phosphate + guanine. It catalyses the reaction 2'-deoxyguanosine + phosphate = 2-deoxy-alpha-D-ribose 1-phosphate + guanine. The catalysed reaction is 2'-deoxyinosine + phosphate = 2-deoxy-alpha-D-ribose 1-phosphate + hypoxanthine. It functions in the pathway purine metabolism; purine nucleoside salvage. As part of the purine salvage pathway, catalyzes the phosphorolytic breakdown of the N-glycosidic bond in the beta-(deoxy)ribonucleoside molecules, with the formation of the corresponding free purine bases and pentose-1-phosphate. Preferentially acts on inosine and guanosine, and to a lesser extent on 2'-deoxyinosine and 2'-deoxyguanosine. This is Purine nucleoside phosphorylase from Plasmodium vivax (strain Salvador I).